The following is a 188-amino-acid chain: MKISANSIRTGNILVYSNDLWVVSRTPEHTQPGKGGAYVQVEMKNLKTGTKRNERFSSSDYLEKAELEQKDYQFLYFEGNDLVLMDIKHFDQINVPKEILEEKLPFLAENMIVKVEFYNEKPLNIELPPTVIIEISETDPVIKGATATASYKPAILTNGIKVKVPQYLEIGEKIVVKTDDMTYVERAK.

It belongs to the elongation factor P family.

It is found in the cytoplasm. The protein operates within protein biosynthesis; polypeptide chain elongation. Involved in peptide bond synthesis. Stimulates efficient translation and peptide-bond synthesis on native or reconstituted 70S ribosomes in vitro. Probably functions indirectly by altering the affinity of the ribosome for aminoacyl-tRNA, thus increasing their reactivity as acceptors for peptidyl transferase. This chain is Elongation factor P, found in Rickettsia canadensis (strain McKiel).